A 77-amino-acid polypeptide reads, in one-letter code: uncharacterized protein (77 aa).

This is an uncharacterized protein from Vaccinia virus (strain Western Reserve) (VACV).